A 244-amino-acid chain; its full sequence is MRTKYLIGNWKTNKDLHQALAFVEQFKQHPAKTKAVLGIAPVHVHLTEVNKVLPNNLLLLAQDANFIASGSYTGTVSYTQLQDIKVNSVIIGHSERRKYFNETAQVINQKLKACLQAGMLVVLCIGETEGQPISFLKEDLTQVLQGIDLSLLKQLVIAYEPIWAIGTGKTATPEIANNTIAQIRVYLSELYNKEIAQQTSILYGGSVAKDNIKELAQTEQIDGFLVGKASLDVNDFLVMAQVYA.

Asparagine 9–lysine 11 contributes to the substrate binding site. Histidine 93 functions as the Electrophile in the catalytic mechanism. Glutamate 160 functions as the Proton acceptor in the catalytic mechanism. Glycine 166 and serine 206 together coordinate substrate.

The protein belongs to the triosephosphate isomerase family. In terms of assembly, homodimer.

It localises to the cytoplasm. The enzyme catalyses D-glyceraldehyde 3-phosphate = dihydroxyacetone phosphate. The protein operates within carbohydrate biosynthesis; gluconeogenesis. Its pathway is carbohydrate degradation; glycolysis; D-glyceraldehyde 3-phosphate from glycerone phosphate: step 1/1. Involved in the gluconeogenesis. Catalyzes stereospecifically the conversion of dihydroxyacetone phosphate (DHAP) to D-glyceraldehyde-3-phosphate (G3P). The sequence is that of Triosephosphate isomerase from Mycoplasma pneumoniae (strain ATCC 29342 / M129 / Subtype 1) (Mycoplasmoides pneumoniae).